The following is a 271-amino-acid chain: Aquaporin-2 (271 aa).

The Cytoplasmic portion of the chain corresponds to 1-11 (MWELRSIAFSR). A helical membrane pass occupies residues 12–32 (AVLAEFLATLLFVFFGLGSAL). The Extracellular segment spans residues 33–40 (NWPQALPS). Residues 41 to 59 (VLQIAMAFGLAIGTLVQAL) traverse the membrane as a helical segment. Over 60–64 (GHVSG) the chain is Cytoplasmic. An intramembrane region (discontinuously helical) is located at residues 65–74 (AHINPAVTVA). An NPA 1 motif is present at residues 68–70 (NPA). Residues 75 to 85 (CLVGCHVSFLR) are Cytoplasmic-facing. Residues 86 to 107 (AVFYVAAQLLGAVAGAALLHEI) traverse the membrane as a helical segment. The Extracellular segment spans residues 108–127 (TPPAIRGDLAVNALNNNSTA). N-linked (GlcNAc...) asparagine glycans are attached at residues N123 and N124. Residues 128–148 (GQAVTVELFLTLQLVLCIFPS) traverse the membrane as a helical segment. Residues 149–156 (TDKRRGKQ) are Cytoplasmic-facing. A helical membrane pass occupies residues 157-176 (LGHPALSIGFSVALGHLLGI). The Extracellular segment spans residues 177–180 (HYTG). An intramembrane region (discontinuously helical) is located at residues 181–193 (CSMNPARSLAPAI). Residues 184 to 186 (NPA) carry the NPA 2 motif. At 194-201 (VTGKFDDH) the chain is on the extracellular side. Residues 202 to 222 (WVFWIGPLVGAIVASLLYNYV) form a helical membrane-spanning segment. At 223–271 (LFPPAKSLSERLAVLKGLEPDTDWEEREVRRRQSVELHSPQSLPRGTKA) the chain is on the cytoplasmic side. Residues 249-271 (REVRRRQSVELHSPQSLPRGTKA) are disordered. S256 bears the Phosphoserine mark. Over residues 261–271 (SPQSLPRGTKA) the composition is skewed to polar residues.

Belongs to the MIP/aquaporin (TC 1.A.8) family. As to quaternary structure, homotetramer. Ser-256 phosphorylation is necessary and sufficient for expression at the apical membrane. Endocytosis is not phosphorylation-dependent. In terms of processing, N-glycosylated. Expressed in renal collecting tubules.

Its subcellular location is the apical cell membrane. It is found in the basolateral cell membrane. The protein resides in the cell membrane. The protein localises to the cytoplasmic vesicle membrane. It localises to the golgi apparatus. Its subcellular location is the trans-Golgi network membrane. It catalyses the reaction H2O(in) = H2O(out). The enzyme catalyses glycerol(in) = glycerol(out). Forms a water-specific channel that provides the plasma membranes of renal collecting duct with high permeability to water, thereby permitting water to move in the direction of an osmotic gradient. Could also be permeable to glycerol. The chain is Aquaporin-2 from Ovis aries (Sheep).